The sequence spans 230 residues: Ureidoacrylate amidohydrolase RutB (230 aa).

The active-site Proton acceptor is aspartate 24. Lysine 133 is an active-site residue. Cysteine 166 acts as the Nucleophile in catalysis.

The protein belongs to the isochorismatase family. RutB subfamily.

The enzyme catalyses (Z)-3-ureidoacrylate + H2O + H(+) = (Z)-3-aminoacrylate + NH4(+) + CO2. It catalyses the reaction (Z)-3-ureidoacrylate + H2O = (Z)-3-aminoacrylate + carbamate + H(+). The catalysed reaction is (Z)-2-methylureidoacrylate + H2O + H(+) = (Z)-2-methylaminoacrylate + NH4(+) + CO2. In terms of biological role, hydrolyzes ureidoacrylate to form aminoacrylate and carbamate. The carbamate hydrolyzes spontaneously, thereby releasing one of the nitrogen atoms of the pyrimidine ring as ammonia and one of its carbon atoms as CO2. The protein is Ureidoacrylate amidohydrolase RutB of Escherichia coli (strain B / BL21-DE3).